We begin with the raw amino-acid sequence, 753 residues long: MAP/microtubule affinity-regulating kinase 3 (753 aa).

The segment at 1–36 (MSTRTPLPTVNERDTENHTSHGDGRQEVTSRTSRSG) is disordered. Over residues 11–28 (NERDTENHTSHGDGRQEV) the composition is skewed to basic and acidic residues. Ser42 is modified (phosphoserine). One can recognise a Protein kinase domain in the interval 56 to 307 (YRLLKTIGKG…LEQIMKDRWI (252 aa)). Residues 62–70 (IGKGNFAKV) and Lys85 contribute to the ATP site. Residue Asp178 is the Proton acceptor of the active site. Position 211 is a phosphothreonine; by LKB1 (Thr211). The UBA domain maps to 326–365 (ISDQKRIDIMVGMGYSQEEIQESLSKMKYDEITATYLLLG). Phosphoserine occurs at positions 368, 374, 376, 380, 383, 384, 400, 407, 419, and 469. The interval 370–600 (ELDASDSSSS…TPLSQTRSRG (231 aa)) is disordered. The segment covering 374 to 385 (SDSSSSSNLSLA) has biased composition (low complexity). Residues 391–400 (SDLNNSTGQS) are compositionally biased toward polar residues. 2 stretches are compositionally biased toward polar residues: residues 490-513 (STVP…CSER) and 521-548 (VIQN…SSAA). Phosphoserine is present on residues Ser540 and Ser543. Thr549 carries the phosphothreonine modification. Thr564 bears the Phosphothreonine; by PKC/PRKCZ mark. Phosphoserine occurs at positions 583, 598, 601, and 643. The segment covering 584-600 (PSLSHEATPLSQTRSRG) has biased composition (polar residues). The interval 632-655 (NGRYEGSSRNVSAEQKDENKEAKP) is disordered. The segment covering 645-655 (EQKDENKEAKP) has biased composition (basic and acidic residues). A KA1 domain is found at 704-753 (DGHAENLVQWEMEVCKLPRLSLNGVRFKRISGTSIAFKNIASKIANELKL).

It belongs to the protein kinase superfamily. CAMK Ser/Thr protein kinase family. SNF1 subfamily. As to quaternary structure, interacts with MAPT/TAU. Interacts with DLG5 (via coiled-coil domain). Interacts with STK3/MST2 and STK4/MST1 in the presence of DLG5. Interacts with YWHAB, YWHAG, YWHAQ and YWHAZ. Interacts with PKP2 (via N-terminus). Interacts with CDC25C. Interacts with KSR1. In terms of processing, phosphorylated at Thr-211 by STK11/LKB1 in complex with STE20-related adapter-alpha (STRADA) pseudo kinase and CAB39. Phosphorylation at Thr-564 by PRKCZ/aPKC inhibits the kinase activity. Ubiquitous.

Its subcellular location is the cell membrane. The protein localises to the cell projection. The protein resides in the dendrite. It localises to the cytoplasm. It carries out the reaction L-seryl-[protein] + ATP = O-phospho-L-seryl-[protein] + ADP + H(+). The catalysed reaction is L-threonyl-[protein] + ATP = O-phospho-L-threonyl-[protein] + ADP + H(+). Activated by phosphorylation on Thr-211. Inhibited by phosphorylation on Thr-564. Serine/threonine-protein kinase. Involved in the specific phosphorylation of microtubule-associated proteins for MAP2 and MAP4. Phosphorylates the microtubule-associated protein MAPT/TAU. Phosphorylates CDC25C on 'Ser-216'. Regulates localization and activity of some histone deacetylases by mediating phosphorylation of HDAC7, promoting subsequent interaction between HDAC7 and 14-3-3 and export from the nucleus. Regulates localization and activity of MITF by mediating its phosphorylation, promoting subsequent interaction between MITF and 14-3-3 and retention in the cytosol. Negatively regulates the Hippo signaling pathway and antagonizes the phosphorylation of LATS1. Cooperates with DLG5 to inhibit the kinase activity of STK3/MST2 toward LATS1. Phosphorylates PKP2 and KSR1. The polypeptide is MAP/microtubule affinity-regulating kinase 3 (MARK3) (Homo sapiens (Human)).